We begin with the raw amino-acid sequence, 627 residues long: Glycerophosphodiester phosphodiesterase domain-containing protein 4 (627 aa).

Residues 1–17 are Cytoplasmic-facing; the sequence is MLLFLWIETSNEYFNFD. The chain crosses the membrane as a helical span at residues 18-38; the sequence is WVIFLGTGYWFYWSIFILSLA. A topological domain (extracellular) is located at residue Gly-39. A helical membrane pass occupies residues 40–60; sequence ILTAYSSLLLLLGLLLLWEGI. At 61–69 the chain is on the cytoplasmic side; it reads ELYLHLCHK. A helical membrane pass occupies residues 70 to 90; sequence ILILLVILPCVILMFIICKFW. Residues 91–107 lie on the Extracellular side of the membrane; that stretch reads KERWLVAGLSLQIFAPY. The chain crosses the membrane as a helical span at residues 108-128; sequence VHLVSITVMVILFWPVAIYVA. Residues 129–162 lie on the Cytoplasmic side of the membrane; that stretch reads RLEREVRMRRYRMTHSEKKRLKKCNVIARLRGLQ. The helical transmembrane segment at 163 to 183 threads the bilayer; that stretch reads VAVGLPFLLIFLSLCLMPLGI. Residues 184-468 are Extracellular-facing; it reads YSPCIQEKEN…PHFFMTPKFY (285 aa). The GP-PDE domain maps to 198–457; that stretch reads PTLFGHRGAP…DNIGLLSQLN (260 aa). A divalent metal cation is bound by residues Glu-230, Asp-232, and His-245. Residues Asn-308 and Asn-397 are each glycosylated (N-linked (GlcNAc...) asparagine). Residues 469–489 form a helical membrane-spanning segment; the sequence is MFIWLLVDIISVLFIVAIFCF. Over 490–627 the chain is Cytoplasmic; the sequence is HWRRETIKEK…TMPSVEVPYP (138 aa).

Belongs to the glycerophosphoryl diester phosphodiesterase family.

The protein resides in the membrane. The sequence is that of Glycerophosphodiester phosphodiesterase domain-containing protein 4 (GDPD4) from Macaca fascicularis (Crab-eating macaque).